The following is a 589-amino-acid chain: Cell fusion protein aff-1 (589 aa).

The signal sequence occupies residues 1-20 (MRLWQWSIAVAICLVMVTEA). Residues 21-537 (RLRRHHRKRR…MAHGGDFTEW (517 aa)) lie on the Extracellular side of the membrane. N-linked (GlcNAc...) asparagine glycosylation is found at N58, N138, N205, N335, N382, N392, and N408. The chain crosses the membrane as a helical span at residues 538–558 (LKIGIHIVIAVGLLLLLILLF). Residues 559–589 (TKCLVPLACCSLSIPFKNRNKKKKKKNSSDY) are Cytoplasmic-facing.

Belongs to the EFF/AFF cell fusogen family. In terms of tissue distribution, expressed in amphid sheath cells.

The protein resides in the cell membrane. The protein localises to the apical cell membrane. Required for cell fusion events during development including the fusion of anchor cells (AC), vulval A and vulval D rings, and late epidermal seam cells. Required for amphid sheath cell fusion induced by entry into dauer stage. The sequence is that of Cell fusion protein aff-1 from Caenorhabditis elegans.